The chain runs to 281 residues: Pantothenate synthetase (281 aa).

31–38 (MGNLHAGH) contributes to the ATP binding site. Residue histidine 38 is the Proton donor of the active site. Residue glutamine 62 participates in (R)-pantoate binding. Residue glutamine 62 participates in beta-alanine binding. 150 to 153 (GKKD) is a binding site for ATP. Glutamine 156 is a (R)-pantoate binding site. Residues valine 179 and 187–190 (MSSR) contribute to the ATP site.

This sequence belongs to the pantothenate synthetase family. Homodimer.

Its subcellular location is the cytoplasm. It carries out the reaction (R)-pantoate + beta-alanine + ATP = (R)-pantothenate + AMP + diphosphate + H(+). The protein operates within cofactor biosynthesis; (R)-pantothenate biosynthesis; (R)-pantothenate from (R)-pantoate and beta-alanine: step 1/1. Its function is as follows. Catalyzes the condensation of pantoate with beta-alanine in an ATP-dependent reaction via a pantoyl-adenylate intermediate. The chain is Pantothenate synthetase from Xylella fastidiosa (strain M23).